Consider the following 620-residue polypeptide: Siderophore iron transporter ARN2 (620 aa).

A disordered region spans residues 1–42; the sequence is MIEVPEDNRSSQTKRKNTEKNCNELMVDEKMDDDSSPRDEMK. Basic and acidic residues predominate over residues 16–42; sequence KNTEKNCNELMVDEKMDDDSSPRDEMK. 14 helical membrane-spanning segments follow: residues 71 to 93, 106 to 128, 135 to 152, 162 to 184, 191 to 213, 223 to 245, 286 to 308, 318 to 335, 355 to 377, 392 to 414, 421 to 438, 448 to 470, 491 to 513, and 561 to 578; these read IFLFSAFICTFAYGLDSSIRGTY, LISTVSVIVLMISAVSQVIFGGL, LTLFLVSIVLYIVGTIIQ, AAGAVFYYVGLVGVMLQVVLMLS, WRLFYTLIPSWPSIITTWVSGSV, WSWNIAMWAFIFPLCCIPLILCM, VVGVLLFTAGVGCILVPLTLAGG, IIGPFVLGFVLVPGFIYW, VWAPLGIMFFICFVYQMAAGYLY, TRIINLYSFVTAVVAPFLGLIVT, SYIIFGGSLYFITMGLFY, GGIIAGMVIWGLSSCLFDYPTIV, VFRIGGAVAAAISGAIWTQSLYP, and VIVALVFSAPMFLLTFCV.

The protein belongs to the major facilitator superfamily.

The protein resides in the endosome membrane. Its function is as follows. Involved in the transport of siderophore triacestylfusarinine C and so has a role in iron homeostasis. This chain is Siderophore iron transporter ARN2 (ARN2), found in Saccharomyces cerevisiae (strain ATCC 204508 / S288c) (Baker's yeast).